The sequence spans 407 residues: Peptidase T (407 aa).

Histidine 82 contributes to the Zn(2+) binding site. Aspartate 84 is an active-site residue. Aspartate 143 is a binding site for Zn(2+). The active-site Proton acceptor is glutamate 177. Residues glutamate 178, aspartate 200, and histidine 382 each coordinate Zn(2+).

It belongs to the peptidase M20B family. Requires Zn(2+) as cofactor.

It localises to the cytoplasm. The catalysed reaction is Release of the N-terminal residue from a tripeptide.. Functionally, cleaves the N-terminal amino acid of tripeptides. This is Peptidase T from Streptococcus pyogenes serotype M49 (strain NZ131).